A 384-amino-acid polypeptide reads, in one-letter code: Putative RNA methyltransferase slr0064 (384 aa).

The THUMP domain occupies 53 to 164; that stretch reads LLYRINLWSR…QNHCQLSLDS (112 aa).

Belongs to the methyltransferase superfamily.

This Synechocystis sp. (strain ATCC 27184 / PCC 6803 / Kazusa) protein is Putative RNA methyltransferase slr0064.